The following is a 618-amino-acid chain: Manganese lipoxygenase (618 aa).

Positions 1-16 are cleaved as a signal peptide; sequence MRSRILAIVFAARHVA. A compositionally biased stretch (low complexity) spans 36–45; it reads SSTTVLPSPT. The disordered stretch occupies residues 36-58; it reads SSTTVLPSPTQYTLPNNDPNQGA. Residues 46-58 show a composition bias toward polar residues; the sequence is QYTLPNNDPNQGA. The region spanning 47–618 is the Lipoxygenase domain; the sequence is YTLPNNDPNQ…PAVNPFFLSV (572 aa). Asn60, Asn91, Asn106, Asn116, and Asn157 each carry an N-linked (GlcNAc...) asparagine glycan. Mn(2+) contacts are provided by His290, His294, His478, and Asn482. The N-linked (GlcNAc...) asparagine glycan is linked to Asn513. Val618 provides a ligand contact to Mn(2+).

The protein belongs to the lipoxygenase family. Manganese lipoxygenase subfamily. The cofactor is Mn(2+). N- and O-glycosylated.

It is found in the secreted. It carries out the reaction (9Z,12Z)-octadecadienoate + O2 = (11S)-hydroperoxy-(9Z,12Z)-octadecadienoate. The enzyme catalyses (9Z,12Z)-octadecadienoate + O2 = (13R)-hydroperoxy-(9Z,11E)-octadecadienoate. It catalyses the reaction (9Z,12Z,15Z)-octadecatrienoate + O2 = (11S)-hydroperoxy-(9Z,12Z,15Z)-octadecatrienoate. The catalysed reaction is (9Z,12Z,15Z)-octadecatrienoate + O2 = (13R)-hydroperoxy-(9Z,11E,15Z)-octadecatrienoate. Its function is as follows. Lipoxygenase that metabolizes linoleic and alpha-linolenic acids to 11S- and 13R-hydroperoxy fatty acids. At the end of lipoxygenation, the intermediate product 11S-HPODE from linoleic acid is then transformed into 13R-HPODE as the final product. It also acts on alpha-linolenic acid producing 11S-HPOTrE and 13R-HPOTrE with subsequent transformation of 11S-HPOTrE to 13R-HPOTrE as final product. The polypeptide is Manganese lipoxygenase (Gaeumannomyces avenae (Oat take-all root rot fungus)).